A 148-amino-acid polypeptide reads, in one-letter code: MKTLFLLALLALVASTTFAQYSEVGGWYNEVGGGGGSQQCPQERPKLSSCKDYVMERCFTMKDFPVTWPTKWWKGGCEHEVREKCCKQLSQIAPQCRCDSIRRVIQGRLGGFLGIWRGEVFKQLQRAQSLPSKCNMGADCKFPSGYYW.

Residues 1-19 (MKTLFLLALLALVASTTFA) form the signal peptide. The propeptide occupies 20–29 (QYSEVGGWYN).

Post-translationally, five disulfide bonds are present. Endosperm and aleurone layer of developing kernels. In the aleurone layer, mainly localized to starch granules and the surface of the plasma membrane, forming a uniform layer, also abundant in the intercellular space. In the endosperm, mainly localized to starch granules and the plasma membrane, but less abundant in the intercellular space. Not found in roots or coleoptiles.

The protein resides in the membrane. Its subcellular location is the secreted. It localises to the extracellular space. Acts as a membranotoxin, probably through its antibacterial and antifungal activities, contributing to the defense mechanism of the plant against predators. Forms monovalent cation-selective ion channels in membranes. Has antibacterial activity against the Gram-positive bacteria S.aureus and C.michiganensis, and the Gram-negative bacteria E.coli, P.syringae pv phaseoli, A.tumefaciens and E.carotovora subsp carotovora. Acts synergistically with PINA against bacteria. Contributes to grain texture and hardness. The sequence is that of Puroindoline-B (PINB) from Triticum aestivum (Wheat).